The following is a 267-amino-acid chain: tRNA pseudouridine synthase A (267 aa).

The active-site Nucleophile is the Asp-55. Tyr-109 lines the substrate pocket.

Belongs to the tRNA pseudouridine synthase TruA family.

The catalysed reaction is uridine(38/39/40) in tRNA = pseudouridine(38/39/40) in tRNA. Functionally, formation of pseudouridine at positions 38, 39 and 40 in the anticodon stem and loop of transfer RNAs. The protein is tRNA pseudouridine synthase A of Natronomonas pharaonis (strain ATCC 35678 / DSM 2160 / CIP 103997 / JCM 8858 / NBRC 14720 / NCIMB 2260 / Gabara) (Halobacterium pharaonis).